The chain runs to 459 residues: Putrescine aminotransferase (459 aa).

Residues 150–151 (GT) and Q274 each bind pyridoxal 5'-phosphate. K300 is subject to N6-(pyridoxal phosphate)lysine. T332 serves as a coordination point for pyridoxal 5'-phosphate.

Belongs to the class-III pyridoxal-phosphate-dependent aminotransferase family. Putrescine aminotransferase subfamily. Requires pyridoxal 5'-phosphate as cofactor.

The catalysed reaction is an alkane-alpha,omega-diamine + 2-oxoglutarate = an omega-aminoaldehyde + L-glutamate. It carries out the reaction putrescine + 2-oxoglutarate = 1-pyrroline + L-glutamate + H2O. The enzyme catalyses cadaverine + 2-oxoglutarate = 5-aminopentanal + L-glutamate. The protein operates within amine and polyamine degradation; putrescine degradation; 4-aminobutanal from putrescine (transaminase route): step 1/1. Catalyzes the aminotransferase reaction from putrescine to 2-oxoglutarate, leading to glutamate and 4-aminobutanal, which spontaneously cyclizes to form 1-pyrroline. This is the first step in one of two pathways for putrescine degradation, where putrescine is converted into 4-aminobutanoate (gamma-aminobutyrate or GABA) via 4-aminobutanal. Also functions as a cadaverine transaminase in a a L-lysine degradation pathway to succinate that proceeds via cadaverine, glutarate and L-2-hydroxyglutarate. The protein is Putrescine aminotransferase of Klebsiella pneumoniae subsp. pneumoniae (strain ATCC 700721 / MGH 78578).